Reading from the N-terminus, the 929-residue chain is Ribonucleoside-diphosphate reductase large chain (929 aa).

Residues 1 to 92 (MYVKKRDGRQ…VSNLHKQTKK (92 aa)) enclose the ATP-cone domain. Residues 5–6 (KR), 11–17 (ERVQFDK), Thr-53, and Asp-57 contribute to the ATP site. Ser-202 and Ser-217 together coordinate GDP. Cys-218 and Cys-444 are disulfide-bonded. DTTP contacts are provided by residues 226-228 (DSI), Lys-243, Arg-256, and 263-264 (AG). Asn-427 lines the GDP pocket. Asn-427 functions as the Proton acceptor in the catalytic mechanism. The Cysteine radical intermediate role is filled by Cys-429. GDP is bound by residues Glu-431 and 605–608 (TAST). Glu-431 (proton acceptor) is an active-site residue. The segment at 789 to 904 (ENTSGPRPYA…RDENIYSNAP (116 aa)) is disordered. Positions 800-809 (TGVSGTSTPI) are enriched in polar residues. Positions 868–884 (VKTEDIGSPLLERKEGQ) are enriched in basic and acidic residues. Residues 885 to 894 (NEDVDEDSQE) show a composition bias toward acidic residues.

Belongs to the ribonucleoside diphosphate reductase large chain family.

The enzyme catalyses a 2'-deoxyribonucleoside 5'-diphosphate + [thioredoxin]-disulfide + H2O = a ribonucleoside 5'-diphosphate + [thioredoxin]-dithiol. With respect to regulation, under complex allosteric control mediated by deoxynucleoside triphosphates and ATP binding to separate specificity and activation sites on the large subunit. The type of nucleotide bound at the specificity site determines substrate preference. It seems probable that ATP makes the enzyme reduce CDP and UDP, dGTP favors ADP reduction and dTTP favors GDP reduction. Stimulated by ATP and inhibited by dATP binding to the activity site. Its function is as follows. Provides the precursors necessary for DNA synthesis. Catalyzes the biosynthesis of deoxyribonucleotides from the corresponding ribonucleotides. This is Ribonucleoside-diphosphate reductase large chain (rnr-1) from Neurospora crassa (strain ATCC 24698 / 74-OR23-1A / CBS 708.71 / DSM 1257 / FGSC 987).